Consider the following 118-residue polypeptide: uncharacterized protein (118 aa).

A disulfide bridge links Cys-11 with Cys-14.

The protein belongs to the ArsC family.

This is an uncharacterized protein from Bacillus subtilis (strain 168).